The chain runs to 942 residues: VPS35 endosomal protein sorting factor-like (942 aa).

This sequence belongs to the VPS35L family. As to quaternary structure, component of the heterotrimeric retriever complex.

The protein localises to the endosome. In terms of biological role, acts as a component of the retriever complex. The retriever complex is a heterotrimeric complex related to retromer cargo-selective complex (CSC) and essential for retromer-independent retrieval and recycling of numerous cargos. This chain is VPS35 endosomal protein sorting factor-like, found in Drosophila melanogaster (Fruit fly).